A 225-amino-acid polypeptide reads, in one-letter code: Ribonuclease 3 (225 aa).

The 123-residue stretch at 7–129 folds into the RNase III domain; it reads MPRLCRTLGY…IIGAVYIDSG (123 aa). E42 contacts Mg(2+). Residue D46 is part of the active site. Mg(2+) contacts are provided by D115 and E118. E118 is a catalytic residue. A DRBM domain is found at 155 to 225; that stretch reads DPKTLLQELL…AADALELMKR (71 aa).

This sequence belongs to the ribonuclease III family. Homodimer. The cofactor is Mg(2+).

It is found in the cytoplasm. It carries out the reaction Endonucleolytic cleavage to 5'-phosphomonoester.. In terms of biological role, digests double-stranded RNA. Involved in the processing of primary rRNA transcript to yield the immediate precursors to the large and small rRNAs (23S and 16S). Processes some mRNAs, and tRNAs when they are encoded in the rRNA operon. Processes pre-crRNA and tracrRNA of type II CRISPR loci if present in the organism. The sequence is that of Ribonuclease 3 from Shewanella sediminis (strain HAW-EB3).